Reading from the N-terminus, the 240-residue chain is 14-3-3 protein 3 (240 aa).

This sequence belongs to the 14-3-3 family. Interacts with coactosin. Interacts with ACTO/actophorin.

The protein localises to the cytoplasm. Its subcellular location is the cell projection. It is found in the phagocytic cup. Its function is as follows. Adapter protein which is required for phagocytosis and motility, probably by regulating actin cytoskeleton dynamics. During phagocytosis, plays a role in the initiation and/or formation of the phagocytic cup and is involved in the recruitment of the actin binding protein coactosin to the phagocytic cup. The protein is 14-3-3 protein 3 of Entamoeba histolytica (strain ATCC 30459 / HM-1:IMSS / ABRM).